Here is a 571-residue protein sequence, read N- to C-terminus: Peptide-N4-(N-acetyl-beta-glucosaminyl)asparagine amidase A (571 aa).

Residues asparagine 121, asparagine 143, asparagine 197, asparagine 241, asparagine 318, asparagine 367, asparagine 390, asparagine 423, asparagine 457, asparagine 481, asparagine 524, and asparagine 529 are each glycosylated (N-linked (GlcNAc...) asparagine).

Heterodimer of a large and a small chain. In terms of processing, is highly glycosylated and is largly resistant against self-deglycosylation.

It catalyses the reaction Hydrolysis of an N(4)-(acetyl-beta-D-glucosaminyl)asparagine residue in which the glucosamine residue may be further glycosylated, to yield a (substituted) N-acetyl-beta-D-glucosaminylamine and a peptide containing an aspartate residue.. This chain is Peptide-N4-(N-acetyl-beta-glucosaminyl)asparagine amidase A, found in Prunus dulcis (Almond).